Consider the following 64-residue polypeptide: Prokaryotic ubiquitin-like protein Pup (64 aa).

Polar residues predominate over residues Met-1 to Ser-10. A disordered region spans residues Met-1–Asn-32. Positions Asp-20–Tyr-58 are ARC ATPase binding. Gln-64 is modified (deamidated glutamine). An Isoglutamyl lysine isopeptide (Gln-Lys) (interchain with K-? in acceptor proteins) cross-link involves residue Gln-64.

This sequence belongs to the prokaryotic ubiquitin-like protein family. As to quaternary structure, strongly interacts with the proteasome-associated ATPase ARC through a hydrophobic interface; the interacting region of Pup lies in its C-terminal half. There is one Pup binding site per ARC hexamer ring. Post-translationally, is modified by deamidation of its C-terminal glutamine to glutamate by the deamidase Dop, a prerequisite to the subsequent pupylation process.

It participates in protein degradation; proteasomal Pup-dependent pathway. Protein modifier that is covalently attached to lysine residues of substrate proteins, thereby targeting them for proteasomal degradation. The tagging system is termed pupylation. The protein is Prokaryotic ubiquitin-like protein Pup of Corynebacterium diphtheriae (strain ATCC 700971 / NCTC 13129 / Biotype gravis).